Here is a 49-residue protein sequence, read N- to C-terminus: uncharacterized protein (49 aa).

The helical transmembrane segment at 5–25 threads the bilayer; that stretch reads LTTIFSVVIVLAIFLYFGLLI.

This sequence belongs to the plectrovirus ORF12 protein family.

It localises to the host membrane. This is an uncharacterized protein from Spiroplasma virus SpV1-R8A2 B (SpV1).